Consider the following 289-residue polypeptide: 4-diphosphocytidyl-2-C-methyl-D-erythritol kinase (289 aa).

The active site involves K10. 95 to 105 provides a ligand contact to ATP; the sequence is PVSAGMGGGSA. Residue D137 is part of the active site.

It belongs to the GHMP kinase family. IspE subfamily.

The catalysed reaction is 4-CDP-2-C-methyl-D-erythritol + ATP = 4-CDP-2-C-methyl-D-erythritol 2-phosphate + ADP + H(+). It functions in the pathway isoprenoid biosynthesis; isopentenyl diphosphate biosynthesis via DXP pathway; isopentenyl diphosphate from 1-deoxy-D-xylulose 5-phosphate: step 3/6. In terms of biological role, catalyzes the phosphorylation of the position 2 hydroxy group of 4-diphosphocytidyl-2C-methyl-D-erythritol. The sequence is that of 4-diphosphocytidyl-2-C-methyl-D-erythritol kinase from Ligilactobacillus salivarius (strain UCC118) (Lactobacillus salivarius).